The sequence spans 228 residues: Nuclear phosphoprotein UL3 homolog (228 aa).

This sequence belongs to the alphaherpesvirinae HHV-1 UL3 family. Phosphorylated.

The protein localises to the host nucleus. The chain is Nuclear phosphoprotein UL3 homolog (MDV015) from Gallus gallus (Chicken).